The following is a 208-amino-acid chain: Large ribosomal subunit protein uL4 (208 aa).

The segment at 45 to 83 (RQGTHKSKTRAEVRGGGRKPYRQKGTGNARQGSTRSPLM) is disordered. The span at 69-80 (GTGNARQGSTRS) shows a compositional bias: polar residues.

Belongs to the universal ribosomal protein uL4 family. In terms of assembly, part of the 50S ribosomal subunit.

In terms of biological role, one of the primary rRNA binding proteins, this protein initially binds near the 5'-end of the 23S rRNA. It is important during the early stages of 50S assembly. It makes multiple contacts with different domains of the 23S rRNA in the assembled 50S subunit and ribosome. Functionally, forms part of the polypeptide exit tunnel. The chain is Large ribosomal subunit protein uL4 from Chlorobium luteolum (strain DSM 273 / BCRC 81028 / 2530) (Pelodictyon luteolum).